Reading from the N-terminus, the 253-residue chain is Ubiquinone/menaquinone biosynthesis C-methyltransferase UbiE (253 aa).

S-adenosyl-L-methionine contacts are provided by residues T76, D97, and 125–126 (NA).

Belongs to the class I-like SAM-binding methyltransferase superfamily. MenG/UbiE family.

It catalyses the reaction a 2-demethylmenaquinol + S-adenosyl-L-methionine = a menaquinol + S-adenosyl-L-homocysteine + H(+). It carries out the reaction a 2-methoxy-6-(all-trans-polyprenyl)benzene-1,4-diol + S-adenosyl-L-methionine = a 5-methoxy-2-methyl-3-(all-trans-polyprenyl)benzene-1,4-diol + S-adenosyl-L-homocysteine + H(+). It participates in quinol/quinone metabolism; menaquinone biosynthesis; menaquinol from 1,4-dihydroxy-2-naphthoate: step 2/2. Its pathway is cofactor biosynthesis; ubiquinone biosynthesis. In terms of biological role, methyltransferase required for the conversion of demethylmenaquinol (DMKH2) to menaquinol (MKH2) and the conversion of 2-polyprenyl-6-methoxy-1,4-benzoquinol (DDMQH2) to 2-polyprenyl-3-methyl-6-methoxy-1,4-benzoquinol (DMQH2). The protein is Ubiquinone/menaquinone biosynthesis C-methyltransferase UbiE of Stenotrophomonas maltophilia (strain R551-3).